The primary structure comprises 465 residues: FAD-dependent monooxygenase pyr5 (465 aa).

An N-terminal signal peptide occupies residues 1-16; sequence MRVLIIGGSIAGLTLA. The FAD site is built by Glu30, Gly44, and Arg103. Tyr210 is a catalytic residue. Residues Asp306 and Ala319 each contribute to the FAD site. The chain crosses the membrane as a helical span at residues 440–456; that stretch reads PTFPLTVAGLCLVAIVI.

This sequence belongs to the paxM FAD-dependent monooxygenase family. It depends on FAD as a cofactor.

Its subcellular location is the membrane. The enzyme catalyses 4-hydroxy-3-[(2E,6E)-farnesyl]-6-(pyridin-3-yl)-2H-pyran-2-one + NADPH + O2 + H(+) = 2-oxo-3-[(8S)-epoxy-(2E,6E)-farnesyl]-6-(pyridin-3-yl)-2H-pyran-4-olate + NADP(+) + H2O. Its pathway is secondary metabolite biosynthesis; terpenoid biosynthesis. Functionally, FAD-dependent monooxygenase; part of the gene cluster that mediates the biosynthesis of pyripyropene A, a specific human acyl-coenzyme A:cholesterol acyltransferase 2 inhibitor. The first step of the pathway is the synthesis of nicotinyl-CoA from nicotinic acid by the nicotinic acid-CoA ligase pyr1. Nicotinyl-CoA is then a substrate of polyketide synthase pyr2 to produce 4-hydroxy-6-(3-pyridinyl)-2H-pyran-2-one (HPPO) which is further prenylated by the polyprenyl transferase pyr6 to yield farnesyl-HPPO. The next steps consist of an epoxidation of farnesyl-HPPO to epoxyfarnesyl-HPPO by FAD-dependent monooxygenase pyr5 and a cyclization of the terpenoid portion by the terpene cyclase pyr4 to yield deacetyl-pyripyropene E. The 2 cytochrome P450 monooxygenases pyr3 and pyr9, and the 2 acetyltransferases pyr7 and pyr8 are involved in the conversion of deacetyl-pyripyropene E into pyripyropene A through several cycles of oxidation and acetylation steps. Pyr7 acetylates deacetyl-pyripyropene E to pyripyropene E which is oxidized to 11-deacetyl-pyripyropene O by pyr3, which is in turn acetylated into pyripyropene O by pyr8. Pyripyropene O is then oxidized to deacetyl-pyripyropene A by pyr9. Deacetyl-pyripyropene A is finally acetylated to pyripyropene A by pyr8. The protein is FAD-dependent monooxygenase pyr5 of Aspergillus fumigatus (strain ATCC MYA-4609 / CBS 101355 / FGSC A1100 / Af293) (Neosartorya fumigata).